A 512-amino-acid polypeptide reads, in one-letter code: ADP,ATP carrier protein 4 (512 aa).

The next 11 membrane-spanning stretches (helical) occupy residues 34-54 (ISKF…QNLI), 71-91 (ISFL…VIYV), 102-122 (IFYL…YVIF), 157-177 (FSLF…LLFW), 192-212 (FYPL…HFLE), 231-251 (FHTL…IVSI), 296-316 (LIAT…GPWK), 330-350 (AAFI…FVLL), 361-381 (FTSA…FFAV), 390-410 (LIIA…IGAI), and 476-496 (SISI…IWAT).

The protein belongs to the ADP/ATP translocase tlc family.

The protein localises to the cell membrane. Its function is as follows. Provides the rickettsial cell with host ATP in exchange for rickettsial ADP. This is an obligate exchange system. This energy acquiring activity is an important component of rickettsial parasitism. The sequence is that of ADP,ATP carrier protein 4 (tlcD) from Rickettsia prowazekii (strain Madrid E).